The primary structure comprises 204 residues: Recombination protein RecR (204 aa).

Residues 63 to 78 form a C4-type zinc finger; the sequence is CRRCFNITVGELCAIC. The region spanning 86 to 181 is the Toprim domain; that stretch reads TKICVVEEPL…RVTRPARGLP (96 aa).

This sequence belongs to the RecR family.

Its function is as follows. May play a role in DNA repair. It seems to be involved in an RecBC-independent recombinational process of DNA repair. It may act with RecF and RecO. This is Recombination protein RecR from Chloroflexus aurantiacus (strain ATCC 29366 / DSM 635 / J-10-fl).